Consider the following 355-residue polypeptide: F-box only protein 32 (355 aa).

The Nuclear localization signal motif lies at 62-67; sequence KKRKKD. The short motif at 169 to 173 is the Nuclear export signal element; sequence LLQTL. One can recognise an F-box domain in the interval 223–271; it reads LTFTDLPLCLQLNIMQRLSDGRDLVSLGQAAPDLHVLSEDRLLWKKLCQ. Residues 280 to 295 carry the Bipartite nuclear localization signal motif; it reads RKRLILSDKGQLDWKK.

Part of the SCF (SKP1-CUL1-F-box) E3 ubiquitin-protein ligase complex SCF(FBXO32) formed of CUL1, SKP1, RBX1 and FBXO32. Specifically expressed in cardiac and skeletal muscle.

It is found in the cytoplasm. Its subcellular location is the nucleus. It functions in the pathway protein modification; protein ubiquitination. In terms of biological role, substrate recognition component of a SCF (SKP1-CUL1-F-box protein) E3 ubiquitin-protein ligase complex which mediates the ubiquitination and subsequent proteasomal degradation of target proteins. Probably recognizes and binds to phosphorylated target proteins during skeletal muscle atrophy. Recognizes TERF1. The chain is F-box only protein 32 (FBXO32) from Homo sapiens (Human).